The chain runs to 75 residues: UPF0352 protein YejL (75 aa).

This sequence belongs to the UPF0352 family.

The sequence is that of UPF0352 protein YejL from Salmonella agona (strain SL483).